Consider the following 148-residue polypeptide: Large ribosomal subunit protein bL9 (148 aa).

The protein belongs to the bacterial ribosomal protein bL9 family.

Functionally, binds to the 23S rRNA. The polypeptide is Large ribosomal subunit protein bL9 (Pseudomonas syringae pv. tomato (strain ATCC BAA-871 / DC3000)).